Here is a 390-residue protein sequence, read N- to C-terminus: 3,5-dihydroxyphenylacetyl-CoA synthase (390 aa).

Cys-173 is an active-site residue.

The protein belongs to the thiolase-like superfamily. Chalcone/stilbene synthases family.

It catalyses the reaction 4 malonyl-CoA + 4 H(+) = (3,5-dihydroxyphenyl)acetyl-CoA + 4 CO2 + 3 CoA + H2O. It participates in antibiotic biosynthesis; vancomycin biosynthesis. Functionally, involved in the biosynthesis of the nonproteinogenic amino acid monomer (S)-3,5-dihydroxyphenylglycine (Dpg) responsible of the production of vancomycin and teicoplanin antibiotics. Catalyzes the Claisen condensation of four molecules of malonyl-CoA to yield 3,5-dihydroxyphenylacetyl-CoA (DPA-CoA) and three free coenzyme A (CoA). DpgA requires the presence of the dehydratases DpgB and DpgD to facilitate the aromatization of the DPA-S-DgpA or DPA-S-CoA intermediate. The polypeptide is 3,5-dihydroxyphenylacetyl-CoA synthase (Streptomyces toyocaensis).